The chain runs to 113 residues: Protein MGF 110-2L (113 aa).

Residues 1–31 (MGFFSYLGLVLVGLASLTSLASLANLQDFST) form the signal peptide.

The protein belongs to the asfivirus MGF 110 family.

Plays a role in virus cell tropism, and may be required for efficient virus replication in macrophages. The sequence is that of Protein MGF 110-2L from African swine fever virus (isolate Pig/Kenya/KEN-50/1950) (ASFV).